Reading from the N-terminus, the 422-residue chain is D-amino acid dehydrogenase (422 aa).

3 to 17 (VVVIGAGVVGTASAW) lines the FAD pocket.

Belongs to the DadA oxidoreductase family. FAD serves as cofactor.

The enzyme catalyses a D-alpha-amino acid + A + H2O = a 2-oxocarboxylate + AH2 + NH4(+). Its pathway is amino-acid degradation; D-alanine degradation; NH(3) and pyruvate from D-alanine: step 1/1. In terms of biological role, oxidative deamination of D-amino acids. The protein is D-amino acid dehydrogenase of Paramagnetospirillum magneticum (strain ATCC 700264 / AMB-1) (Magnetospirillum magneticum).